The sequence spans 370 residues: 4-hydroxy-3-methylbut-2-en-1-yl diphosphate synthase (flavodoxin) (370 aa).

Residues cysteine 268, cysteine 271, cysteine 303, and glutamate 310 each contribute to the [4Fe-4S] cluster site.

It belongs to the IspG family. It depends on [4Fe-4S] cluster as a cofactor.

The catalysed reaction is (2E)-4-hydroxy-3-methylbut-2-enyl diphosphate + oxidized [flavodoxin] + H2O + 2 H(+) = 2-C-methyl-D-erythritol 2,4-cyclic diphosphate + reduced [flavodoxin]. It functions in the pathway isoprenoid biosynthesis; isopentenyl diphosphate biosynthesis via DXP pathway; isopentenyl diphosphate from 1-deoxy-D-xylulose 5-phosphate: step 5/6. Converts 2C-methyl-D-erythritol 2,4-cyclodiphosphate (ME-2,4cPP) into 1-hydroxy-2-methyl-2-(E)-butenyl 4-diphosphate. This Bacillus cereus (strain AH187) protein is 4-hydroxy-3-methylbut-2-en-1-yl diphosphate synthase (flavodoxin).